Consider the following 70-residue polypeptide: Sec-independent protein translocase protein TatA (70 aa).

Residues 1-21 traverse the membrane as a helical segment; that stretch reads MGIGVWELLLLFLIVLVVFGT. The segment at 42 to 70 is disordered; the sequence is MSENEDKPSEGGARTLEGEVVDKKEKDKV. A compositionally biased stretch (basic and acidic residues) spans 57–70; the sequence is LEGEVVDKKEKDKV.

The protein belongs to the TatA/E family. As to quaternary structure, the Tat system comprises two distinct complexes: a TatABC complex, containing multiple copies of TatA, TatB and TatC subunits, and a separate TatA complex, containing only TatA subunits. Substrates initially bind to the TatABC complex, which probably triggers association of the separate TatA complex to form the active translocon.

It is found in the cell inner membrane. In terms of biological role, part of the twin-arginine translocation (Tat) system that transports large folded proteins containing a characteristic twin-arginine motif in their signal peptide across membranes. TatA could form the protein-conducting channel of the Tat system. This chain is Sec-independent protein translocase protein TatA, found in Methylococcus capsulatus (strain ATCC 33009 / NCIMB 11132 / Bath).